The following is a 315-amino-acid chain: Methionyl-tRNA formyltransferase (315 aa).

A (6S)-5,6,7,8-tetrahydrofolate-binding site is contributed by 113-116 (SLLP).

It belongs to the Fmt family.

It catalyses the reaction L-methionyl-tRNA(fMet) + (6R)-10-formyltetrahydrofolate = N-formyl-L-methionyl-tRNA(fMet) + (6S)-5,6,7,8-tetrahydrofolate + H(+). In terms of biological role, attaches a formyl group to the free amino group of methionyl-tRNA(fMet). The formyl group appears to play a dual role in the initiator identity of N-formylmethionyl-tRNA by promoting its recognition by IF2 and preventing the misappropriation of this tRNA by the elongation apparatus. This is Methionyl-tRNA formyltransferase from Salmonella dublin (strain CT_02021853).